The sequence spans 198 residues: Golgi to ER traffic protein 1 (198 aa).

Topologically, residues 1–6 are lumenal; sequence MDPFSI. The chain crosses the membrane as a helical span at residues 7 to 26; sequence LLTLTLIILAQNAVRIVGKS. The Cytoplasmic segment spans residues 27-110; that stretch reads QIHQSIWNLY…AIEKYLGLAI (84 aa). Residues 73–106 adopt a coiled-coil conformation; that stretch reads KWTKLNRKYDQLQTEIKAVSDQVSQQQQAIEKYL. A helical transmembrane segment spans residues 111–131; the sequence is SVTTTLPLWLFRFKYRKQPLF. At 132 to 155 the chain is on the lumenal side; sequence YFPKDTFPSYLEWILSFPSVPQGS. A helical membrane pass occupies residues 156-172; sequence IGIMFWILLLNKFVSNL. The Cytoplasmic segment spans residues 173-198; the sequence is EFIVKTFSTKVEKPVPIVKVEDLSPK.

It belongs to the WRB/GET1 family. As to quaternary structure, component of the Golgi to ER traffic (GET) complex, which is composed of GET1, GET2 and GET3. Within the complex, GET1 and GET2 form a heterotetramer which is stabilized by phosphatidylinositol binding and which binds to the GET3 homodimer.

The protein resides in the endoplasmic reticulum membrane. It is found in the golgi apparatus membrane. Its function is as follows. Required for the post-translational delivery of tail-anchored (TA) proteins to the endoplasmic reticulum. Together with GET2, acts as a membrane receptor for soluble GET3, which recognizes and selectively binds the transmembrane domain of TA proteins in the cytosol. The GET complex cooperates with the HDEL receptor ERD2 to mediate the ATP-dependent retrieval of resident ER proteins that contain a C-terminal H-D-E-L retention signal from the Golgi to the ER. This chain is Golgi to ER traffic protein 1, found in Komagataella phaffii (strain GS115 / ATCC 20864) (Yeast).